The primary structure comprises 440 residues: uncharacterized protein (440 aa).

The next 10 helical transmembrane spans lie at asparagine 26 to phenylalanine 46, phenylalanine 59 to leucine 79, phenylalanine 96 to lysine 116, leucine 138 to leucine 158, phenylalanine 211 to alanine 231, leucine 241 to isoleucine 261, tryptophan 263 to phenylalanine 283, tryptophan 284 to isoleucine 304, phenylalanine 394 to isoleucine 414, and isoleucine 418 to isoleucine 438.

This sequence to M.pneumoniae MPN_087.

It is found in the cell membrane. This is an uncharacterized protein from Mycoplasma pneumoniae (strain ATCC 29342 / M129 / Subtype 1) (Mycoplasmoides pneumoniae).